The sequence spans 207 residues: Nitrophorin-1 (207 aa).

The first 23 residues, Met-1–Gly-23, serve as a signal peptide directing secretion. 2 disulfides stabilise this stretch: Cys-25–Cys-145 and Cys-64–Cys-194. Residue His-82 participates in heme binding.

It belongs to the calycin superfamily. Nitrophorin family. As to expression, salivary gland (at protein level).

The protein localises to the secreted. Its function is as follows. Heme-based protein that deliver nitric oxide gas (NO) to the victim while feeding, resulting in vasodilation and inhibition of platelet aggregation. Reversibly binds nitric oxide (NO). Also binds tightly to histamine, which is released by the host to induce wound healing. This chain is Nitrophorin-1, found in Rhodnius prolixus (Triatomid bug).